Here is a 232-residue protein sequence, read N- to C-terminus: MAQSKRVKAIAAAVVPGKTYAFEDAIKILKTSTKAKFVESIDVAVRLGVDAKKSDQQVRGSTVLPAGTGKSVRVAVFAPAGAKADEALAAGAEAVGMDDLAEKMQAGDLNYDVVIATPDAMRVVGKLGTLLGPRGLMPNPKVGTVSPNPGEAVKNAKSGQVRYRTDKAGIIHCTIGKASFDDEALKSNLQALLLDLVKAKPATSKGTYLQKVSVSSTMGPGVTVDQSSLSLK.

The protein belongs to the universal ribosomal protein uL1 family. As to quaternary structure, part of the 50S ribosomal subunit.

Functionally, binds directly to 23S rRNA. The L1 stalk is quite mobile in the ribosome, and is involved in E site tRNA release. In terms of biological role, protein L1 is also a translational repressor protein, it controls the translation of the L11 operon by binding to its mRNA. The protein is Large ribosomal subunit protein uL1 of Xanthomonas campestris pv. campestris (strain B100).